The primary structure comprises 515 residues: 1-pyrroline-5-carboxylate dehydrogenase (515 aa).

Residues Glu-286 and Cys-320 contribute to the active site.

Belongs to the aldehyde dehydrogenase family. RocA subfamily.

The enzyme catalyses L-glutamate 5-semialdehyde + NAD(+) + H2O = L-glutamate + NADH + 2 H(+). Its pathway is amino-acid degradation; L-proline degradation into L-glutamate; L-glutamate from L-proline: step 2/2. In Bacillus mycoides (strain KBAB4) (Bacillus weihenstephanensis), this protein is 1-pyrroline-5-carboxylate dehydrogenase.